The primary structure comprises 862 residues: Fork head protein homolog 2 (862 aa).

Positions 83–152 (VSIGRNTDPL…NGAKVNFQRT (70 aa)) constitute an FHA domain. A DNA-binding region (fork-head) is located at residues 339–430 (VKPPHSYATM…QQEFLNKWNT (92 aa)). 4 disordered regions span residues 498–528 (PSKGNLPASQQSQPPVSHQNQSQQPPPQEQR), 611–663 (SDSA…GTTT), 698–730 (PERGSANRARSPLHSNSNNTNNNGANNSNLQTS), and 750–846 (ESNN…ANAK). Over residues 504–520 (PASQQSQPPVSHQNQSQ) the composition is skewed to low complexity. A compositionally biased stretch (polar residues) spans 611-644 (SDSADKSTNNNGGTKMNLPAISTSSLDENGNLEP). Over residues 645-655 (TTTTSSGNSNS) the composition is skewed to low complexity. Position 708 is a phosphoserine (Ser-708). Over residues 712 to 726 (SNSNNTNNNGANNSN) the composition is skewed to low complexity. 2 stretches are compositionally biased toward polar residues: residues 750–770 (ESNNDNRRLTPSTSKSQNVKS) and 778–788 (LQFSSTNNTPA). A compositionally biased stretch (basic and acidic residues) spans 804 to 829 (IKAKENENATSEKDSDSNSNDLETKD). Over residues 830 to 844 (INSSPLKNQGGSTAN) the composition is skewed to polar residues. Phosphoserine occurs at positions 832 and 833.

As to quaternary structure, interacts with MCM1. Interacts with NDD1. Interacts with the origin recognition complex (ORC) composed of ORC1 to ORC6.

It is found in the nucleus. It localises to the cytoplasm. The protein localises to the cytosol. Transcription factor that regulates the expression of the CLB2 cluster of genes during the G2/M phase of the mitotic cell cycle. The CLB2 cluster of genes includes mitotic regulators such as CLB1, CLB2, CDC5 and CDC20 as well as SWI5 and ACE2, transcription factors required for the subsequent temporal wave of cell cycle regulated gene expression in the M/G1 phase interval. Involved in HMRa silencing. FKH1 and FKH2 associate with the coding regions of active genes and influence, in opposing ways, transcriptional elongation and termination, and coordinate early transcription elongation and pre-mRNA processing. Both FKH1 and FKH2 play a role as regulators of lifespan in collaboration with the anaphase-promoting complex (APC), likely through combined regulation of stress response, genomic stability, and cell cycle regulation. FKH1 and FKH2 function also in controlling yeast cell morphology by preventing preudohyphal growth. Acts as a rate-limiting replication origin activator via its interaction with the origin recognition complex (ORC). The polypeptide is Fork head protein homolog 2 (Saccharomyces cerevisiae (strain ATCC 204508 / S288c) (Baker's yeast)).